The sequence spans 140 residues: Nucleoside diphosphate kinase (140 aa).

ATP is bound by residues K9, F57, R85, T91, R102, and N112. H115 serves as the catalytic Pros-phosphohistidine intermediate.

It belongs to the NDK family. As to quaternary structure, homotetramer. Requires Mg(2+) as cofactor.

It is found in the cytoplasm. The catalysed reaction is a 2'-deoxyribonucleoside 5'-diphosphate + ATP = a 2'-deoxyribonucleoside 5'-triphosphate + ADP. It catalyses the reaction a ribonucleoside 5'-diphosphate + ATP = a ribonucleoside 5'-triphosphate + ADP. Its function is as follows. Major role in the synthesis of nucleoside triphosphates other than ATP. The ATP gamma phosphate is transferred to the NDP beta phosphate via a ping-pong mechanism, using a phosphorylated active-site intermediate. The polypeptide is Nucleoside diphosphate kinase (Chlorobaculum parvum (strain DSM 263 / NCIMB 8327) (Chlorobium vibrioforme subsp. thiosulfatophilum)).